Here is a 179-residue protein sequence, read N- to C-terminus: Small ribosomal subunit protein uS5 (179 aa).

One can recognise an S5 DRBM domain in the interval M22–V85.

It belongs to the universal ribosomal protein uS5 family. As to quaternary structure, part of the 30S ribosomal subunit. Contacts proteins S4 and S8.

In terms of biological role, with S4 and S12 plays an important role in translational accuracy. Functionally, located at the back of the 30S subunit body where it stabilizes the conformation of the head with respect to the body. This is Small ribosomal subunit protein uS5 from Xylella fastidiosa (strain M12).